Here is a 74-residue protein sequence, read N- to C-terminus: Invertase 3 (74 aa).

Positions 1–19 (MLLQAFIFLLAGFAAKISA) are cleaved as a signal peptide. N-linked (GlcNAc...) asparagine glycosylation is present at N23. Residues 39-42 (WMND) and Q60 contribute to the substrate site. D42 is an active-site residue. N-linked (GlcNAc...) asparagine glycosylation is present at N64.

It belongs to the glycosyl hydrolase 32 family.

The catalysed reaction is Hydrolysis of terminal non-reducing beta-D-fructofuranoside residues in beta-D-fructofuranosides.. This chain is Invertase 3 (SUC3), found in Saccharomyces cerevisiae (Baker's yeast).